The following is a 101-amino-acid chain: Phosphoribosyl-AMP cyclohydrolase (101 aa).

Mg(2+) is bound at residue D71. C72 contacts Zn(2+). Mg(2+)-binding residues include D73 and D75. C88 and C95 together coordinate Zn(2+).

This sequence belongs to the PRA-CH family. As to quaternary structure, homodimer. Mg(2+) is required as a cofactor. Requires Zn(2+) as cofactor.

The protein resides in the cytoplasm. It carries out the reaction 1-(5-phospho-beta-D-ribosyl)-5'-AMP + H2O = 1-(5-phospho-beta-D-ribosyl)-5-[(5-phospho-beta-D-ribosylamino)methylideneamino]imidazole-4-carboxamide. It functions in the pathway amino-acid biosynthesis; L-histidine biosynthesis; L-histidine from 5-phospho-alpha-D-ribose 1-diphosphate: step 3/9. Catalyzes the hydrolysis of the adenine ring of phosphoribosyl-AMP. The protein is Phosphoribosyl-AMP cyclohydrolase of Bacillus cereus (strain ATCC 10987 / NRS 248).